The chain runs to 954 residues: uncharacterized protein (954 aa).

The first 35 residues, 1–35 (MKILFNNTFELFCLFVFVTWALFLNNNGILYPVHC), serve as a signal peptide directing secretion. A coiled-coil region spans residues 381–415 (KNKISSARDDIQKDINKMESELINVSNEINRLDIV). Residues 733–765 (NIRNDNNNNNNNNNNNSNNNNNNNNNNKDNSVA) are disordered. Residues 736-763 (NDNNNNNNNNNNNSNNNNNNNNNNKDNS) are compositionally biased toward low complexity.

This is an uncharacterized protein from Plasmodium falciparum (isolate 3D7).